The sequence spans 160 residues: Ureidoglycolate lyase (160 aa).

Belongs to the ureidoglycolate lyase family. In terms of assembly, homodimer. Requires Ni(2+) as cofactor.

The catalysed reaction is (S)-ureidoglycolate = urea + glyoxylate. It functions in the pathway nitrogen metabolism; (S)-allantoin degradation. Functionally, catalyzes the catabolism of the allantoin degradation intermediate (S)-ureidoglycolate, generating urea and glyoxylate. Involved in the anaerobic utilization of allantoin as sole nitrogen source. Reinforces the induction of genes involved in the degradation of allantoin and glyoxylate by producing glyoxylate. The polypeptide is Ureidoglycolate lyase (Escherichia coli O127:H6 (strain E2348/69 / EPEC)).